Here is a 129-residue protein sequence, read N- to C-terminus: Large ribosomal subunit protein eL31 (129 aa).

Positions 1–46 are disordered; that stretch reads MSQETTATKQEEQKTSELQQQKKEEQKPQQATTTTKEEKKTKPEKE. Composition is skewed to basic and acidic residues over residues 9 to 27 and 35 to 46; these read KQEE…EEQK and TKEEKKTKPEKE.

Belongs to the eukaryotic ribosomal protein eL31 family.

The chain is Large ribosomal subunit protein eL31 (rpl31e) from Sulfolobus acidocaldarius (strain ATCC 33909 / DSM 639 / JCM 8929 / NBRC 15157 / NCIMB 11770).